The primary structure comprises 185 residues: MTGKLIWLMGASGSGKDSLLTELRQREQTQLLVAHRYITRAASAGSENHIALSEQEFFTRAGQNLLALSWHANGLYYGVGVEIDLWLHAGFDVVVNGSRAHLPQARARYQSALLPVCLQVSPEILRQRLENRGRENASEINARLARAARYTPQDCLTLNNDGSLRQSVDKLLTLIHQKEKHHACL.

This sequence belongs to the ribose 1,5-bisphosphokinase family.

It catalyses the reaction alpha-D-ribose 1,5-bisphosphate + ATP = 5-phospho-alpha-D-ribose 1-diphosphate + ADP. The protein operates within metabolic intermediate biosynthesis; 5-phospho-alpha-D-ribose 1-diphosphate biosynthesis; 5-phospho-alpha-D-ribose 1-diphosphate from D-ribose 5-phosphate (route II): step 3/3. Catalyzes the phosphorylation of ribose 1,5-bisphosphate to 5-phospho-D-ribosyl alpha-1-diphosphate (PRPP). The sequence is that of Ribose 1,5-bisphosphate phosphokinase PhnN from Escherichia coli (strain SMS-3-5 / SECEC).